We begin with the raw amino-acid sequence, 115 residues long: U3-lycotoxin-Ls1b (115 aa).

Positions 1–20 are cleaved as a signal peptide; it reads MKFVLLFGVLLVTLFSYSSA. Positions 21–44 are excised as a propeptide; it reads EMLDDFDQADEDELLSLIEKEEAR. Disulfide bonds link Cys48–Cys63, Cys55–Cys72, Cys62–Cys87, and Cys74–Cys85.

Belongs to the neurotoxin 19 (CSTX) family. 01 subfamily. In terms of tissue distribution, expressed by the venom gland.

The protein resides in the secreted. This Lycosa singoriensis (Wolf spider) protein is U3-lycotoxin-Ls1b.